A 142-amino-acid chain; its full sequence is MSTFSAKPAEVVHEWFVIDATDKVLGRVASEVALRLRGKHKAIYTPHVDTGDYIVIINASKLKVTGTKSLDKVYYRHSGYPGGITATNFRDLQAKHPGRALEKAVKGMLPKGPLGYAMIKKLKVYGGAEHPHTAQQPKALEI.

It belongs to the universal ribosomal protein uL13 family. In terms of assembly, part of the 50S ribosomal subunit.

Its function is as follows. This protein is one of the early assembly proteins of the 50S ribosomal subunit, although it is not seen to bind rRNA by itself. It is important during the early stages of 50S assembly. This chain is Large ribosomal subunit protein uL13, found in Acidovorax sp. (strain JS42).